A 197-amino-acid chain; its full sequence is Segregation and condensation protein B (197 aa).

It belongs to the ScpB family. As to quaternary structure, homodimer. Homodimerization may be required to stabilize the binding of ScpA to the Smc head domains. Component of a cohesin-like complex composed of ScpA, ScpB and the Smc homodimer, in which ScpA and ScpB bind to the head domain of Smc. The presence of the three proteins is required for the association of the complex with DNA.

The protein resides in the cytoplasm. Functionally, participates in chromosomal partition during cell division. May act via the formation of a condensin-like complex containing Smc and ScpA that pull DNA away from mid-cell into both cell halves. This Malacoplasma penetrans (strain HF-2) (Mycoplasma penetrans) protein is Segregation and condensation protein B.